Reading from the N-terminus, the 545-residue chain is Myotubularin-related protein 9 (545 aa).

Met-1 carries the N-acetylmethionine modification. Residues 4-99 form the GRAM domain; sequence AELIKTPRVD…LNIASSIEAL (96 aa). The region spanning 123–498 is the Myotubularin phosphatase domain; it reads GWHSFLPEQE…QSLQLWEGIF (376 aa). Positions 508 to 542 form a coiled coil; the sequence is LDEAYEEMVNIIEYNKELQAKVNVLRRQLAELETE.

Belongs to the protein-tyrosine phosphatase family. Non-receptor class myotubularin subfamily. In terms of assembly, homodimer. Heterodimer (via C-terminus) with lipid phosphatase MTMR6 (via C-terminus). Heterodimer (via coiled coil domain) with lipid phosphatase MTMR7 (via C-terminus).

The protein localises to the cytoplasm. It is found in the cell projection. It localises to the ruffle membrane. The protein resides in the perinuclear region. Its subcellular location is the endoplasmic reticulum. Acts as an adapter for myotubularin-related phosphatases. Increases lipid phosphatase MTMR6 catalytic activity, specifically towards phosphatidylinositol 3,5-bisphosphate, and MTMR6 binding affinity for phosphorylated phosphatidylinositols. Positively regulates lipid phosphatase MTMR7 catalytic activity. The formation of the MTMR6-MTMR9 complex, stabilizes both MTMR6 and MTMR9 protein levels. Plays a role in the late stages of macropinocytosis possibly by regulating MTMR6-mediated dephosphorylation of phosphatidylinositol 3-phosphate in membrane ruffles. Negatively regulates DNA damage-induced apoptosis, in part via its association with MTMR6. Does not bind mono-, di- and tri-phosphorylated phosphatidylinositols, phosphatidic acid and phosphatidylserine. The polypeptide is Myotubularin-related protein 9 (Mtmr9) (Mus musculus (Mouse)).